The chain runs to 227 residues: Cytochrome c oxidase subunit 2 (227 aa).

The Mitochondrial intermembrane segment spans residues 1–14 (MAYPFELGFQDATS). A helical transmembrane segment spans residues 15 to 45 (PIMEELLHFHDHTLMIVFLISSLVLYIISLM). The Mitochondrial matrix segment spans residues 46–59 (LTTKLTHTSTMDAQ). A helical membrane pass occupies residues 60 to 87 (EIETIWTILPAIILILIALPSLRILYMM). The Mitochondrial intermembrane portion of the chain corresponds to 88–227 (DEINDPSLTV…HFENWSSSML (140 aa)). H161, C196, E198, C200, H204, and M207 together coordinate Cu cation. Residue E198 coordinates Mg(2+).

It belongs to the cytochrome c oxidase subunit 2 family. In terms of assembly, component of the cytochrome c oxidase (complex IV, CIV), a multisubunit enzyme composed of 14 subunits. The complex is composed of a catalytic core of 3 subunits MT-CO1, MT-CO2 and MT-CO3, encoded in the mitochondrial DNA, and 11 supernumerary subunits COX4I, COX5A, COX5B, COX6A, COX6B, COX6C, COX7A, COX7B, COX7C, COX8 and NDUFA4, which are encoded in the nuclear genome. The complex exists as a monomer or a dimer and forms supercomplexes (SCs) in the inner mitochondrial membrane with NADH-ubiquinone oxidoreductase (complex I, CI) and ubiquinol-cytochrome c oxidoreductase (cytochrome b-c1 complex, complex III, CIII), resulting in different assemblies (supercomplex SCI(1)III(2)IV(1) and megacomplex MCI(2)III(2)IV(2)). Found in a complex with TMEM177, COA6, COX18, COX20, SCO1 and SCO2. Interacts with TMEM177 in a COX20-dependent manner. Interacts with COX20. Interacts with COX16. Requires Cu cation as cofactor.

The protein localises to the mitochondrion inner membrane. The catalysed reaction is 4 Fe(II)-[cytochrome c] + O2 + 8 H(+)(in) = 4 Fe(III)-[cytochrome c] + 2 H2O + 4 H(+)(out). Functionally, component of the cytochrome c oxidase, the last enzyme in the mitochondrial electron transport chain which drives oxidative phosphorylation. The respiratory chain contains 3 multisubunit complexes succinate dehydrogenase (complex II, CII), ubiquinol-cytochrome c oxidoreductase (cytochrome b-c1 complex, complex III, CIII) and cytochrome c oxidase (complex IV, CIV), that cooperate to transfer electrons derived from NADH and succinate to molecular oxygen, creating an electrochemical gradient over the inner membrane that drives transmembrane transport and the ATP synthase. Cytochrome c oxidase is the component of the respiratory chain that catalyzes the reduction of oxygen to water. Electrons originating from reduced cytochrome c in the intermembrane space (IMS) are transferred via the dinuclear copper A center (CU(A)) of subunit 2 and heme A of subunit 1 to the active site in subunit 1, a binuclear center (BNC) formed by heme A3 and copper B (CU(B)). The BNC reduces molecular oxygen to 2 water molecules using 4 electrons from cytochrome c in the IMS and 4 protons from the mitochondrial matrix. In Tamias townsendii (Townsend's chipmunk), this protein is Cytochrome c oxidase subunit 2 (MT-CO2).